Reading from the N-terminus, the 484-residue chain is MDVDGEGDRGQNPRIMERDSDSIKDPISEPSWFTPKKLLFVFCVVNLINYIDRGAIASNGINGSRGSCTSSGTCSSGSGIQGDFNLSNFEDGVLSSAFMVGLLVASPIFASLAKSVNPFRLIGVGLSIWTLAVIGCGLSFDFWSITICRMFVGVGEASFVSLAAPFIDDNAPHDQKSAWLAVFYMCIPTGYAFGYVYGGVVGSVLPWRAAFWGEAILMLPFAVLGFVIKPLHLKGFAPDDTGKPRTDNLNVLPVGYGFSAVMKDLKLLLVDKVYVTNILGYIAYNFVLGAYSYWGPKAGYNIYKMENADMIFGGVTVVCGIVGTLSGGVILDYMDATISNAFKVLSVSTFIGAIFCFAAFCFKSMYAFLALFAVGELLVFATQGPVNFIVLHCVKPSLRPLAMAMSTVSIHIFGDVPSSPLVGVLQDYVNNWRVTSLVLTFVLFPAAAIWSIGIFLNSVDRYNEDSEPDAVTRESTAAPLLQEA.

The tract at residues 1-23 (MDVDGEGDRGQNPRIMERDSDSI) is disordered. The helical transmembrane segment at 38-58 (LLFVFCVVNLINYIDRGAIAS) threads the bilayer. N-linked (GlcNAc...) asparagine glycosylation is found at Asn-62 and Asn-85. 11 helical membrane passes run 93–113 (VLSS…ASLA), 122–142 (IGVG…SFDF), 147–167 (ICRM…APFI), 181–201 (AVFY…GGVV), 209–229 (AAFW…FVIK), 273–293 (VYVT…AYSY), 311–331 (IFGG…GVIL), 345–362 (LSVS…AFCF), 377–397 (LLVF…VKPS), 405–425 (MSTV…VGVL), and 436–456 (SLVL…GIFL). A Phosphoserine modification is found at Ser-466.

It belongs to the major facilitator superfamily. Spinster (TC 2.A.1.49) family.

Its subcellular location is the late endosome membrane. It localises to the lysosome membrane. Probable sphingolipid transporter that plays a central role in endosomes and/or lysosomes storage. This is Probable sphingolipid transporter spinster homolog 2 from Arabidopsis thaliana (Mouse-ear cress).